The primary structure comprises 709 residues: ATP-binding cassette sub-family F member 3 (709 aa).

The residue at position 2 (A2) is an N-acetylalanine. S83 bears the Phosphoserine mark. Positions 129–143 are enriched in basic and acidic residues; the sequence is RLKAKQEKRSEKDTL. The segment at 129–171 is disordered; the sequence is RLKAKQEKRSEKDTLKTSNPLVLEEASASQAGSRKESRLESSG. Phosphoserine is present on residues S155, S157, and S161. Positions 161-171 are enriched in basic and acidic residues; sequence SRKESRLESSG. ABC transporter domains follow at residues 178 to 424 and 492 to 707; these read VRIE…LNQQ and LQLD…RREG. 210–217 is an ATP binding site; that stretch reads GRNGLGKT. S283 carries the post-translational modification Phosphoserine. 525–532 lines the ATP pocket; the sequence is GENGAGKS.

Belongs to the ABC transporter superfamily. ABCF family. EF3 subfamily.

In terms of biological role, displays an antiviral effect against flaviviruses such as west Nile virus (WNV) in the presence of OAS1B. The protein is ATP-binding cassette sub-family F member 3 (ABCF3) of Homo sapiens (Human).